A 651-amino-acid polypeptide reads, in one-letter code: Bromodomain-containing protein 7 (651 aa).

A Glycyl lysine isopeptide (Lys-Gly) (interchain with G-Cter in SUMO2) cross-link involves residue K21. Positions V34–R103 are disordered. Residues T35–D45 show a composition bias toward polar residues. The span at S47–K57 shows a compositional bias: basic and acidic residues. Over residues H58–G69 the composition is skewed to basic residues. Positions K65–R96 match the Nuclear localization signal motif. Basic and acidic residues predominate over residues E70 to R103. Glycyl lysine isopeptide (Lys-Gly) (interchain with G-Cter in SUMO2) cross-links involve residues K127, K186, K197, K201, K212, and K241. Residues V131 to E235 form the Bromo domain. The disordered stretch occupies residues K252 to E316. Residues S279 and S289 each carry the phosphoserine modification. Positions P290–E316 are enriched in basic and acidic residues. Residue K305 forms a Glycyl lysine isopeptide (Lys-Gly) (interchain with G-Cter in SUMO2) linkage. K328 carries the post-translational modification N6-acetyllysine. K344 participates in a covalent cross-link: Glycyl lysine isopeptide (Lys-Gly) (interchain with G-Cter in SUMO2). Position 380 is a phosphoserine (S380). K389 participates in a covalent cross-link: Glycyl lysine isopeptide (Lys-Gly) (interchain with G-Cter in SUMO2). A phosphoserine mark is found at S475, S482, and S483. Residues S536–R567 are a coiled coil. At S621 the chain carries Phosphoserine.

Interacts with IRF2 and HNRPUL1. Interacts (via N-terminus) with TP53. Interacts (via C-terminus) with EP300. Interacts with BRCA1. Interacts (via bromo domain) with histone H3 (via N-terminus) acetylated at 'Lys-14' (H3K14ac). Has low affinity for histone H3 acetylated at 'Lys-9' (H3K9ac). Has the highest affinity for histone H3 that is acetylated both at 'Lys-9' (H3K9ac) and at 'Lys-14' (H3K14ac). Has very low affinity for non-acetylated histone H3. Interacts (via bromo domain) with histone H4 (via N-terminus) acetylated at 'Lys-8' (H3K8ac) (in vitro). Interacts with TRIM24, PTPN13 and DVL1. Identified in a complex with SMARCA4/BRG1, SMARCC1/BAF155, SMARCE1/BAF57, DPF2/BAF45D and ARID2, subunits of the SWI/SNF-B (PBAF) chromatin remodeling complex. Ubiquitous.

The protein resides in the nucleus. Its subcellular location is the chromosome. Functionally, acts both as coactivator and as corepressor. May play a role in chromatin remodeling. Transcriptional corepressor that down-regulates the expression of target genes. Binds to target promoters, leading to increased histone H3 acetylation at 'Lys-9' (H3K9ac). Binds to the ESR1 promoter. Recruits BRCA1 and POU2F1 to the ESR1 promoter. Coactivator for TP53-mediated activation of transcription of a set of target genes. Required for TP53-mediated cell-cycle arrest in response to oncogene activation. Promotes acetylation of TP53 at 'Lys-382', and thereby promotes efficient recruitment of TP53 to target promoters. Inhibits cell cycle progression from G1 to S phase. Activator of the Wnt signaling pathway in a DVL1-dependent manner by negatively regulating the GSK3B phosphotransferase activity. Induces dephosphorylation of GSK3B at 'Tyr-216'. Down-regulates TRIM24-mediated activation of transcriptional activation by AR. The protein is Bromodomain-containing protein 7 (Brd7) of Mus musculus (Mouse).